The chain runs to 442 residues: MITPKVLSGFKDRLPKDAIQKAQLLSKVSVVFQSFGFVPIETPHLEYAETLLPDASSDIQKEIYRFKDHGGRDVALRFDLTVPLARFVSLYHQTLGMPFKRYAIGNVFRGERAQKGRYREFTQCDFDFIGSESLVCDAEIIQVVIASLKALDLEDFCVSINHRKILNGICEYFGISQVTGVLRIVDKLEKIGLNGVEEELKKECDLNPNTIKGLLEMVQIKQDDLSHAEFFEKIAYLKDCNENLKKGIQDLEKLYQLLGDLQISQNLYKIDFSIARGLGYYTGIVYETTLNDMKSLGSVCSGGRYDHLTKNFSKEDLQGVGASIGIDRLIVALSGMQLLDERSTQAKVLIACMNEEYFSYANRLAESLRQSGIFSEVYPEAQKIKKPFSYANHKGHEFVAIIGEEEFKSETLSLKNMHSGMQLNCLSFLKALEIIGENDEDL.

This sequence belongs to the class-II aminoacyl-tRNA synthetase family. As to quaternary structure, homodimer.

The protein localises to the cytoplasm. It carries out the reaction tRNA(His) + L-histidine + ATP = L-histidyl-tRNA(His) + AMP + diphosphate + H(+). The sequence is that of Histidine--tRNA ligase from Helicobacter acinonychis (strain Sheeba).